The following is a 785-amino-acid chain: E3 UFM1-protein ligase 1 homolog (785 aa).

Positions 396-416 are enriched in basic and acidic residues; it reads MKHQDVIPDKESAENKADKRD. The interval 396-473 is disordered; the sequence is MKHQDVIPDK…KSAGGKKGAK (78 aa). Positions 439–449 are enriched in basic residues; sequence KSTKKHARGHR.

It belongs to the UFL1 family.

In terms of biological role, E3 UFM1-protein ligase that mediates ufmylation of target proteins. The chain is E3 UFM1-protein ligase 1 homolog from Culex quinquefasciatus (Southern house mosquito).